The chain runs to 247 residues: ATP synthase subunit a, chloroplastic (247 aa).

The next 5 helical transmembrane spans lie at 28-48, 95-115, 134-154, 199-219, and 220-240; these read GQVL…CLLG, VPFL…GALI, INTT…AGIS, LVVG…IMLL, and GLFT…AYIG.

This sequence belongs to the ATPase A chain family. As to quaternary structure, F-type ATPases have 2 components, CF(1) - the catalytic core - and CF(0) - the membrane proton channel. CF(1) has five subunits: alpha(3), beta(3), gamma(1), delta(1), epsilon(1). CF(0) has four main subunits: a, b, b' and c.

It is found in the plastid. Its subcellular location is the chloroplast thylakoid membrane. In terms of biological role, key component of the proton channel; it plays a direct role in the translocation of protons across the membrane. In Chlorella vulgaris (Green alga), this protein is ATP synthase subunit a, chloroplastic.